The sequence spans 412 residues: Alpha-ketoglutarate-dependent sulfonate dioxygenase (412 aa).

Phosphoserine is present on S52. H218 and D220 together coordinate Fe cation. Positions 245 and 352 each coordinate 2-oxoglutarate. H367 provides a ligand contact to Fe cation. 2-oxoglutarate-binding residues include R379 and R383.

Belongs to the TfdA dioxygenase family. Fe(2+) serves as cofactor.

The protein operates within organosulfur degradation; alkanesulfonate degradation. In terms of biological role, acts as an alpha-ketoglutarate-dependent dioxygenase active on sulfonates. Although taurine is a poor substrate, a variety of other sulfonates are utilized, with the best natural substrates being isethionate and taurocholate. The polypeptide is Alpha-ketoglutarate-dependent sulfonate dioxygenase (JLP1) (Saccharomyces cerevisiae (strain ATCC 204508 / S288c) (Baker's yeast)).